We begin with the raw amino-acid sequence, 392 residues long: Elongation factor Tu-3 (392 aa).

One can recognise a tr-type G domain in the interval 10–206; it reads KPHLNIGTMG…AVDTYVPMPE (197 aa). The interval 19 to 26 is G1; it reads GHVDHGKT. 19–26 contributes to the GTP binding site; that stretch reads GHVDHGKT. Residue Thr-26 participates in Mg(2+) binding. The G2 stretch occupies residues 63–67; it reads GITIN. Residues 84 to 87 form a G3 region; it reads DMPG. Residues 84-88 and 139-142 each bind GTP; these read DMPGH and NKAD. Residues 139–142 are G4; sequence NKAD. The tract at residues 176-178 is G5; sequence SGL.

The protein belongs to the TRAFAC class translation factor GTPase superfamily. Classic translation factor GTPase family. EF-Tu/EF-1A subfamily. As to quaternary structure, monomer.

The protein localises to the cytoplasm. The catalysed reaction is GTP + H2O = GDP + phosphate + H(+). Functionally, GTP hydrolase that promotes the GTP-dependent binding of aminoacyl-tRNA to the A-site of ribosomes during protein biosynthesis. The chain is Elongation factor Tu-3 from Streptomyces coelicolor (strain ATCC BAA-471 / A3(2) / M145).